The sequence spans 456 residues: MNTVRETIAAIATAQGRGGVGIVRLSGPLAAKAGLLITGRTLTPRHAHYGPFRDDEGLVLDEGIALFFPGPNSFTGEDVLELQGHGGPVVLDMLLQRCVQVGCRLARPGEFSERAFLNDKLDLAQAEAIADLIEASSSQAARNALRSLQGEFSRRVHSLTEALIALRIYVEAAIDFPEEEIDFLADGHVLSMLDAVRSELSTVQREAGQGALLRDGMTVVIAGRPNAGKSSLLNQLAGREAAIVTDIAGTTRDILREHIHIDGMPLHVVDTAGLRDTDDHVEKIGVERALKAIGEADRVLLVVDSTAPEASDPFALWPEFLAQRPDPAKVTLIRNKADLSGERVALEQCDDGHVTITLSAKGDDTGLQLLRDHLKGCMGYEQTAESGFSARRRHLDALRQASEHLEHGRAQLTLAGAGELLAEDLRQAQHALGEITGAFSSDDLLGRIFSSFCIGK.

(6S)-5-formyl-5,6,7,8-tetrahydrofolate is bound by residues Arg24, Glu81, and Lys120. Residues 216–379 form the TrmE-type G domain; sequence GMTVVIAGRP…LRDHLKGCMG (164 aa). Asn226 lines the K(+) pocket. GTP is bound by residues 226–231, 245–251, 270–273, and 335–338; these read NAGKSS, TDIAGTT, DTAG, and NKAD. Mg(2+) is bound at residue Ser230. K(+) contacts are provided by Thr245, Ile247, and Thr250. Position 251 (Thr251) interacts with Mg(2+). Lys456 is a (6S)-5-formyl-5,6,7,8-tetrahydrofolate binding site.

Belongs to the TRAFAC class TrmE-Era-EngA-EngB-Septin-like GTPase superfamily. TrmE GTPase family. As to quaternary structure, homodimer. Heterotetramer of two MnmE and two MnmG subunits. Requires K(+) as cofactor.

It is found in the cytoplasm. Its function is as follows. Exhibits a very high intrinsic GTPase hydrolysis rate. Involved in the addition of a carboxymethylaminomethyl (cmnm) group at the wobble position (U34) of certain tRNAs, forming tRNA-cmnm(5)s(2)U34. The sequence is that of tRNA modification GTPase MnmE from Pseudomonas putida (strain ATCC 47054 / DSM 6125 / CFBP 8728 / NCIMB 11950 / KT2440).